A 91-amino-acid polypeptide reads, in one-letter code: DNA-directed RNA polymerase subunit omega (91 aa).

Residues 66 to 91 (QMPPPLPNFPGAANREATGAEDAAGE) are disordered.

Belongs to the RNA polymerase subunit omega family. In terms of assembly, the RNAP catalytic core consists of 2 alpha, 1 beta, 1 beta' and 1 omega subunit. When a sigma factor is associated with the core the holoenzyme is formed, which can initiate transcription.

The enzyme catalyses RNA(n) + a ribonucleoside 5'-triphosphate = RNA(n+1) + diphosphate. Its function is as follows. Promotes RNA polymerase assembly. Latches the N- and C-terminal regions of the beta' subunit thereby facilitating its interaction with the beta and alpha subunits. This Acidithiobacillus ferrooxidans (strain ATCC 23270 / DSM 14882 / CIP 104768 / NCIMB 8455) (Ferrobacillus ferrooxidans (strain ATCC 23270)) protein is DNA-directed RNA polymerase subunit omega.